The primary structure comprises 140 residues: Sex-regulated protein janus-B (140 aa).

A substrate-binding site is contributed by Arg42. His69 functions as the Proton acceptor in the catalytic mechanism. Residue 110-112 (SRT) participates in substrate binding.

This sequence belongs to the janus family.

Functionally, janA and janB regulate somatic sex differentiation. The polypeptide is Sex-regulated protein janus-B (janB) (Drosophila simulans (Fruit fly)).